The primary structure comprises 129 residues: HTH-type transcriptional regulator HmrR (129 aa).

Residues 1–68 (MNIGEASERS…VEECRQLLAL (68 aa)) form the HTH merR-type domain. The H-T-H motif DNA-binding region spans 4-23 (GEASERSGLPSKTIRYYEDI).

In terms of assembly, homodimer.

The protein localises to the cytoplasm. Its function is as follows. Regulates the transcription of actP. It detects cytoplasmic copper stress and activates transcription in response to increasing copper concentrations. In the absence of copper, it negatively regulates the transcription of actP. This chain is HTH-type transcriptional regulator HmrR (hmrR), found in Rhizobium leguminosarum bv. viciae.